Reading from the N-terminus, the 177-residue chain is MRIEAIATGKNPPEDVNVIIEVPIGGEPIKYEMDKEAGTLFVDRFLHTSMRYPGNYGFVPHTLSGDGDPIDVLVCNTRALVPGCVINVRPIGVLVMEDNAGQDEKVIAVPSPKLTLRYENVTEYTHLPEITRQQVQHFFEHYKDLEPGKWVKIEGWHDSKYAKKMIVDAIERAKKGK.

Substrate contacts are provided by Lys-30, Arg-44, and Tyr-56. Mg(2+) contacts are provided by Asp-66, Asp-71, and Asp-103. Residue Tyr-142 coordinates substrate.

Belongs to the PPase family. Homohexamer. Mg(2+) is required as a cofactor.

The protein localises to the cytoplasm. The enzyme catalyses diphosphate + H2O = 2 phosphate + H(+). Catalyzes the hydrolysis of inorganic pyrophosphate (PPi) forming two phosphate ions. The polypeptide is Inorganic pyrophosphatase (Mesorhizobium japonicum (strain LMG 29417 / CECT 9101 / MAFF 303099) (Mesorhizobium loti (strain MAFF 303099))).